The sequence spans 126 residues: Protein mmf2, mitochondrial (126 aa).

The protein belongs to the RutC family.

The protein resides in the mitochondrion. Its subcellular location is the cytoplasm. Plays a role in the maintenance of mitochondrial DNA. The sequence is that of Protein mmf2, mitochondrial (mmf2) from Schizosaccharomyces pombe (strain 972 / ATCC 24843) (Fission yeast).